The primary structure comprises 1031 residues: Putative glycine dehydrogenase (decarboxylating), mitochondrial (1031 aa).

A mitochondrion-targeting transit peptide spans 1–49 (MFDSFMKRNQLALIMFRACSKLQYHGVNTSLSRHLFLAKRNLSISSACL). Residue K783 is modified to N6-(pyridoxal phosphate)lysine.

This sequence belongs to the GcvP family. It depends on pyridoxal 5'-phosphate as a cofactor.

It localises to the mitochondrion. It catalyses the reaction N(6)-[(R)-lipoyl]-L-lysyl-[glycine-cleavage complex H protein] + glycine + H(+) = N(6)-[(R)-S(8)-aminomethyldihydrolipoyl]-L-lysyl-[glycine-cleavage complex H protein] + CO2. Its function is as follows. The glycine cleavage system catalyzes the degradation of glycine. The P protein binds the alpha-amino group of glycine through its pyridoxal phosphate cofactor; CO(2) is released and the remaining methylamine moiety is then transferred to the lipoamide cofactor of the H protein. The sequence is that of Putative glycine dehydrogenase (decarboxylating), mitochondrial (gcv2) from Schizosaccharomyces pombe (strain 972 / ATCC 24843) (Fission yeast).